The primary structure comprises 329 residues: Beta-ketoacyl-[acyl-carrier-protein] synthase III (329 aa).

Active-site residues include C113 and H256. Positions 257–261 are ACP-binding; sequence QANQR. The active site involves N286.

The protein belongs to the thiolase-like superfamily. FabH family. In terms of assembly, homodimer.

The protein resides in the cytoplasm. The catalysed reaction is malonyl-[ACP] + acetyl-CoA + H(+) = 3-oxobutanoyl-[ACP] + CO2 + CoA. The protein operates within lipid metabolism; fatty acid biosynthesis. Functionally, catalyzes the condensation reaction of fatty acid synthesis by the addition to an acyl acceptor of two carbons from malonyl-ACP. Catalyzes the first condensation reaction which initiates fatty acid synthesis and may therefore play a role in governing the total rate of fatty acid production. Possesses both acetoacetyl-ACP synthase and acetyl transacylase activities. Its substrate specificity determines the biosynthesis of branched-chain and/or straight-chain of fatty acids. The polypeptide is Beta-ketoacyl-[acyl-carrier-protein] synthase III (Natranaerobius thermophilus (strain ATCC BAA-1301 / DSM 18059 / JW/NM-WN-LF)).